Here is a 155-residue protein sequence, read N- to C-terminus: Large ribosomal subunit protein uL22c (155 aa).

It belongs to the universal ribosomal protein uL22 family. As to quaternary structure, part of the 50S ribosomal subunit.

The protein resides in the plastid. It is found in the chloroplast. In terms of biological role, this protein binds specifically to 23S rRNA. Its function is as follows. The globular domain of the protein is located near the polypeptide exit tunnel on the outside of the subunit, while an extended beta-hairpin is found that lines the wall of the exit tunnel in the center of the 70S ribosome. The protein is Large ribosomal subunit protein uL22c (rpl22) of Solanum tuberosum (Potato).